A 252-amino-acid chain; its full sequence is DNA-directed RNA polymerase III subunit rpc8 (252 aa).

The disordered stretch occupies residues 214–252 (WTNQSAGDDDENEEDGGENQDDEVAEDDGGEEPTIEEDE). Positions 220-252 (GDDDENEEDGGENQDDEVAEDDGGEEPTIEEDE) are enriched in acidic residues.

This sequence belongs to the eukaryotic RPB7/RPC8 RNA polymerase subunit family. As to quaternary structure, component of the RNA polymerase III (Pol III) complex consisting of several subunits.

The protein localises to the nucleus. DNA-dependent RNA polymerase catalyzes the transcription of DNA into RNA using the four ribonucleoside triphosphates as substrates. The sequence is that of DNA-directed RNA polymerase III subunit rpc8 (polr3h-1) from Dictyostelium discoideum (Social amoeba).